The chain runs to 402 residues: NADH-quinone oxidoreductase subunit D (402 aa).

This sequence belongs to the complex I 49 kDa subunit family. In terms of assembly, NDH-1 is composed of 14 different subunits. Subunits NuoB, C, D, E, F, and G constitute the peripheral sector of the complex.

The protein localises to the cell inner membrane. The enzyme catalyses a quinone + NADH + 5 H(+)(in) = a quinol + NAD(+) + 4 H(+)(out). In terms of biological role, NDH-1 shuttles electrons from NADH, via FMN and iron-sulfur (Fe-S) centers, to quinones in the respiratory chain. The immediate electron acceptor for the enzyme in this species is believed to be ubiquinone. Couples the redox reaction to proton translocation (for every two electrons transferred, four hydrogen ions are translocated across the cytoplasmic membrane), and thus conserves the redox energy in a proton gradient. The polypeptide is NADH-quinone oxidoreductase subunit D (Maricaulis maris (strain MCS10) (Caulobacter maris)).